We begin with the raw amino-acid sequence, 202 residues long: Venom allergen 5 (202 aa).

Disulfide bonds link cysteine 4–cysteine 16, cysteine 8–cysteine 101, and cysteine 26–cysteine 94. Tyrosine 107 bears the Phosphotyrosine mark. N-linked (Glc) (glycation) lysine glycosylation occurs at lysine 138. Cysteines 168 and 185 form a disulfide.

Belongs to the CRISP family. As to expression, expressed by the venom gland.

It is found in the secreted. Does not show toxicity when intravenously injected into mice tail. The chain is Venom allergen 5 from Vespa velutina (Asian yellow-legged hornet).